Here is a 151-residue protein sequence, read N- to C-terminus: Deoxyuridine 5'-triphosphate nucleotidohydrolase (151 aa).

Substrate contacts are provided by residues 70 to 72 (RSG), Asn83, 87 to 89 (LID), and Met97.

It belongs to the dUTPase family. Mg(2+) is required as a cofactor.

The catalysed reaction is dUTP + H2O = dUMP + diphosphate + H(+). It participates in pyrimidine metabolism; dUMP biosynthesis; dUMP from dCTP (dUTP route): step 2/2. Its function is as follows. This enzyme is involved in nucleotide metabolism: it produces dUMP, the immediate precursor of thymidine nucleotides and it decreases the intracellular concentration of dUTP so that uracil cannot be incorporated into DNA. The sequence is that of Deoxyuridine 5'-triphosphate nucleotidohydrolase from Haemophilus influenzae (strain 86-028NP).